A 147-amino-acid chain; its full sequence is Hemoglobin subunit epsilon (147 aa).

The 145-residue stretch at 3 to 147 (HFTAEEKAAI…VAIALGHKYH (145 aa)) folds into the Globin domain. A phosphoserine mark is found at S14 and S51. The heme b site is built by H64 and H93.

It belongs to the globin family. In terms of assembly, heterotetramer of two alpha chains and two epsilon chains in early embryonic hemoglobin Gower-2; two zeta chains and two epsilon chains in early embryonic hemoglobin Gower-1. Red blood cells.

Its function is as follows. The epsilon chain is a beta-type chain of early mammalian embryonic hemoglobin. The sequence is that of Hemoglobin subunit epsilon (HBE1) from Leontopithecus rosalia (Golden lion tamarin).